Reading from the N-terminus, the 854-residue chain is Protein asteroid (854 aa).

A disordered region spans residues 368–427 (SEEECSDDEHSSSSDEKFSDVEEGEDQEEADNQDEEQQEENQDVDSGDEEEEEADEGLEL). Residues 375-387 (DEHSSSSDEKFSD) are compositionally biased toward basic and acidic residues. Over residues 388 to 427 (VEEGEDQEEADNQDEEQQEENQDVDSGDEEEEEADEGLEL) the composition is skewed to acidic residues.

It belongs to the asteroid family. As to expression, expressed in the proliferative tissues of embryos and in the mitotically active tissue anterior to the morphogenetic furrow in eye imaginal disks.

Functionally, may function in EGF receptor signaling. May play a role in compound eye morphogenesis. This chain is Protein asteroid (ast), found in Drosophila melanogaster (Fruit fly).